The chain runs to 84 residues: Beta-cardiotoxin CTX14 (84 aa).

A signal peptide spans 1–21; the sequence is MKTLLLTLVVVTIVCLDLGYT. 4 disulfides stabilise this stretch: Cys-24–Cys-43, Cys-36–Cys-61, Cys-65–Cys-76, and Cys-77–Cys-82.

Belongs to the three-finger toxin family. Short-chain subfamily. Aminergic toxin sub-subfamily. As to expression, expressed by the venom gland.

The protein resides in the secreted. In terms of biological role, acts as a beta-blocker by binding to beta-1 and beta-2 adrenergic receptors (ADRB1 and ADRB2). It dose-dependently decreases the heart rate (bradycardia), whereas conventional cardiotoxins increases it. At 100 mg/kg, intraperitoneal injection into mice provokes labored breathing, impaired locomotion, lack of response to external stimuli, and death (after 30 minutes). The polypeptide is Beta-cardiotoxin CTX14 (Ophiophagus hannah (King cobra)).